The following is a 73-amino-acid chain: Translation initiation factor IF-1 (73 aa).

Residues 1–73 (MAKKDGVIEL…ARGRIVYRYK (73 aa)) enclose the S1-like domain.

Belongs to the IF-1 family. Component of the 30S ribosomal translation pre-initiation complex which assembles on the 30S ribosome in the order IF-2 and IF-3, IF-1 and N-formylmethionyl-tRNA(fMet); mRNA recruitment can occur at any time during PIC assembly.

Its subcellular location is the cytoplasm. One of the essential components for the initiation of protein synthesis. Stabilizes the binding of IF-2 and IF-3 on the 30S subunit to which N-formylmethionyl-tRNA(fMet) subsequently binds. Helps modulate mRNA selection, yielding the 30S pre-initiation complex (PIC). Upon addition of the 50S ribosomal subunit IF-1, IF-2 and IF-3 are released leaving the mature 70S translation initiation complex. This is Translation initiation factor IF-1 from Tropheryma whipplei (strain TW08/27) (Whipple's bacillus).